The primary structure comprises 1308 residues: Vacuolar transporter chaperone complex subunit 2 (1308 aa).

Residues 1 to 284 (MKFSKQLSAQ…QSSAASWYMS (284 aa)) form the SPX domain. The Cytoplasmic portion of the chain corresponds to 1–1083 (MKFSKQLSAQ…PKTFFANERT (1083 aa)). The interval 144–220 (PQKRGRATEQ…DGGEGEQDDA (77 aa)) is disordered. Over residues 197 to 209 (SRGEGDAKRRQGD) the composition is skewed to basic and acidic residues. An important for inositol polyphosphate binding region spans residues 265-272 (KITKKYDK). Disordered stretches follow at residues 321–384 (QQQS…SLAA), 611–645 (EGAN…GSDD), 846–890 (ATEG…RPRV), 915–946 (SAQV…PSAP), and 981–1004 (PLLD…APTP). A compositionally biased stretch (basic and acidic residues) spans 332–344 (DPSKAASVKEDRS). Gly residues predominate over residues 632 to 641 (EGSGGGGGNR). A compositionally biased stretch (basic and acidic residues) spans 848–857 (EGGKGKKADR). Polar residues-rich tracts occupy residues 859–871 (SVGQ…NQGD) and 915–938 (SAQV…PSVS). Residues 1084-1104 (LLQWMNTAVLIATISITLMNF) traverse the membrane as a helical segment. At 1105–1110 (GNPVGR) the chain is on the vacuolar side. A helical membrane pass occupies residues 1111–1131 (IAGLLMSPVAVFFIGYSFWVY). The Cytoplasmic portion of the chain corresponds to 1132-1152 (LRRARALERKEPIAYNDKLGP). A helical membrane pass occupies residues 1153-1173 (SILVVTLMLSLSAVIALNLLY). Topologically, residues 1174-1308 (HEGEAQLPIT…EGARVTAGAK (135 aa)) are vacuolar.

The protein belongs to the VTC2/3 family. In terms of assembly, the VTC core complex is an integral membrane heterooligomer composed of at least the catalytic subunit vtc4 and the accessory subunits vtc1 and vtc2. vtc1 is a small membrane protein without hydrophilic domain. Vtc2 and vtc4 are related and have 2 hydrophilic domains that face the cytosol, an N-terminal SPX domain and the central core domain. The central core in vtc4 is the catalytic domain.

It is found in the vacuole membrane. Its function is as follows. Accessory subunit of the vacuolar transporter chaperone (VTC) complex. The VTC complex acts as a vacuolar polyphosphate polymerase that catalyzes the synthesis of inorganic polyphosphate (polyP) via transfer of phosphate from ATP to a growing polyP chain, releasing ADP. VTC exposes its catalytic domain vtc4 to the cytosol, where the growing polyP chain winds through a tunnel-shaped pocket, integrating cytoplasmic polymer synthesis with polyP membrane translocation. The VTC complex carries 9 vacuolar transmembrane domains, which are likely to constitute the translocation channel into the organelle lumen. PolyP synthesis is tightly coupled to its transport into the vacuole lumen, in order to avoid otherwise toxic intermediates in the cytosol, and it depends on the proton gradient across the membrane, formed by V-ATPase. The VTC complex also plays a role in vacuolar membrane fusion. This is Vacuolar transporter chaperone complex subunit 2 (vtc2) from Toxoplasma gondii (strain ATCC 50611 / Me49).